Consider the following 711-residue polypeptide: Polyribonucleotide nucleotidyltransferase (711 aa).

Residues Asp486 and Asp492 each contribute to the Mg(2+) site. A KH domain is found at 553–612 (PRIHTIKINPDKIKDVIGKGGSVIRALTEETGTTIEIEDDGTVKIAATDGDKAQHAIRRI). Residues 622–690 (GRIYNGKVTR…RQGRVRLSIK (69 aa)) form the S1 motif domain. The disordered stretch occupies residues 689–711 (IKEATEQTPSAAAPEAPAAEQGE). Residues 694-711 (EQTPSAAAPEAPAAEQGE) are compositionally biased toward low complexity.

This sequence belongs to the polyribonucleotide nucleotidyltransferase family. As to quaternary structure, component of the RNA degradosome, which is a multiprotein complex involved in RNA processing and mRNA degradation. Mg(2+) is required as a cofactor.

The protein localises to the cytoplasm. The enzyme catalyses RNA(n+1) + phosphate = RNA(n) + a ribonucleoside 5'-diphosphate. Involved in mRNA degradation. Catalyzes the phosphorolysis of single-stranded polyribonucleotides processively in the 3'- to 5'-direction. The chain is Polyribonucleotide nucleotidyltransferase from Klebsiella pneumoniae subsp. pneumoniae (strain ATCC 700721 / MGH 78578).